The following is a 264-amino-acid chain: Thymidylate synthase (264 aa).

Residue Arg-21 participates in dUMP binding. His-51 is a (6R)-5,10-methylene-5,6,7,8-tetrahydrofolate binding site. Residue 126 to 127 (RR) coordinates dUMP. Residue Cys-146 is the Nucleophile of the active site. Residues 166–169 (RSAD), Asn-177, and 207–209 (HLY) each bind dUMP. Asp-169 lines the (6R)-5,10-methylene-5,6,7,8-tetrahydrofolate pocket. Ala-263 is a binding site for (6R)-5,10-methylene-5,6,7,8-tetrahydrofolate.

It belongs to the thymidylate synthase family. Bacterial-type ThyA subfamily. As to quaternary structure, homodimer.

The protein localises to the cytoplasm. It carries out the reaction dUMP + (6R)-5,10-methylene-5,6,7,8-tetrahydrofolate = 7,8-dihydrofolate + dTMP. The protein operates within pyrimidine metabolism; dTTP biosynthesis. Functionally, catalyzes the reductive methylation of 2'-deoxyuridine-5'-monophosphate (dUMP) to 2'-deoxythymidine-5'-monophosphate (dTMP) while utilizing 5,10-methylenetetrahydrofolate (mTHF) as the methyl donor and reductant in the reaction, yielding dihydrofolate (DHF) as a by-product. This enzymatic reaction provides an intracellular de novo source of dTMP, an essential precursor for DNA biosynthesis. The protein is Thymidylate synthase of Aromatoleum aromaticum (strain DSM 19018 / LMG 30748 / EbN1) (Azoarcus sp. (strain EbN1)).